A 288-amino-acid chain; its full sequence is Aminoglycoside 6-adenylyltransferase (288 aa).

The enzyme catalyses streptomycin + ATP = 6-O-adenylylstreptomycin + diphosphate. Functionally, mediates bacterial resistance to streptomycin, is probably a streptomycin 6-adenylyltransferase. This Campylobacter jejuni protein is Aminoglycoside 6-adenylyltransferase.